An 80-amino-acid polypeptide reads, in one-letter code: EMBRYO SURROUNDING FACTOR 1-like protein 1 (80 aa).

Residues 1-22 form the signal peptide; that stretch reads MKSSHIALLCIVVLSLFALHEC. 4 disulfides stabilise this stretch: cysteine 38/cysteine 52, cysteine 43/cysteine 78, cysteine 50/cysteine 74, and cysteine 53/cysteine 64.

It belongs to the MEG family. As to expression, expressed in leaves.

The protein is EMBRYO SURROUNDING FACTOR 1-like protein 1 (ESFL1) of Arabidopsis thaliana (Mouse-ear cress).